Consider the following 189-residue polypeptide: Peptidyl-tRNA hydrolase (189 aa).

Tyr18 is a tRNA binding site. His23 functions as the Proton acceptor in the catalytic mechanism. Residues Phe67, Asn69, and Asn115 each contribute to the tRNA site.

The protein belongs to the PTH family. In terms of assembly, monomer.

It localises to the cytoplasm. The enzyme catalyses an N-acyl-L-alpha-aminoacyl-tRNA + H2O = an N-acyl-L-amino acid + a tRNA + H(+). In terms of biological role, hydrolyzes ribosome-free peptidyl-tRNAs (with 1 or more amino acids incorporated), which drop off the ribosome during protein synthesis, or as a result of ribosome stalling. Functionally, catalyzes the release of premature peptidyl moieties from peptidyl-tRNA molecules trapped in stalled 50S ribosomal subunits, and thus maintains levels of free tRNAs and 50S ribosomes. The chain is Peptidyl-tRNA hydrolase from Leptospira borgpetersenii serovar Hardjo-bovis (strain JB197).